We begin with the raw amino-acid sequence, 402 residues long: Tol-Pal system protein TolB (402 aa).

An N-terminal signal peptide occupies residues 1–17 (MKKIVAIFLVFLGSLWA).

Belongs to the TolB family. The Tol-Pal system is composed of five core proteins: the inner membrane proteins TolA, TolQ and TolR, the periplasmic protein TolB and the outer membrane protein Pal. They form a network linking the inner and outer membranes and the peptidoglycan layer.

Its subcellular location is the periplasm. In terms of biological role, part of the Tol-Pal system, which plays a role in outer membrane invagination during cell division and is important for maintaining outer membrane integrity. In Campylobacter jejuni subsp. jejuni serotype O:2 (strain ATCC 700819 / NCTC 11168), this protein is Tol-Pal system protein TolB.